We begin with the raw amino-acid sequence, 279 residues long: Putative pyruvate, phosphate dikinase regulatory protein (279 aa).

An ADP-binding site is contributed by 152–159 (GVSRTSKS).

The protein belongs to the pyruvate, phosphate/water dikinase regulatory protein family. PDRP subfamily.

It catalyses the reaction N(tele)-phospho-L-histidyl/L-threonyl-[pyruvate, phosphate dikinase] + ADP = N(tele)-phospho-L-histidyl/O-phospho-L-threonyl-[pyruvate, phosphate dikinase] + AMP + H(+). The enzyme catalyses N(tele)-phospho-L-histidyl/O-phospho-L-threonyl-[pyruvate, phosphate dikinase] + phosphate + H(+) = N(tele)-phospho-L-histidyl/L-threonyl-[pyruvate, phosphate dikinase] + diphosphate. In terms of biological role, bifunctional serine/threonine kinase and phosphorylase involved in the regulation of the pyruvate, phosphate dikinase (PPDK) by catalyzing its phosphorylation/dephosphorylation. The chain is Putative pyruvate, phosphate dikinase regulatory protein from Anaplasma marginale (strain St. Maries).